Consider the following 510-residue polypeptide: NAD(P)H-quinone oxidoreductase subunit 2 A, chloroplastic (510 aa).

14 consecutive transmembrane segments (helical) span residues 31 to 51 (FIFP…IDLT), 59 to 79 (WFYF…LFRW), 99 to 119 (IFQF…VEYI), 124 to 144 (MAIT…MFLC), 149 to 169 (LITI…LSGY), 184 to 204 (LLMG…LYGL), 229 to 249 (ISIA…LAPF), 261 to 281 (PTPV…ALAT), 295 to 315 (WHLL…LLAI), 323 to 343 (MLAY…IVGD), 354 to 374 (YMLF…LFGL), 395 to 415 (ALSL…AGFF), 418 to 438 (LYLF…IGLL), and 484 to 504 (MTVC…ILAI).

The protein belongs to the complex I subunit 2 family. As to quaternary structure, NDH is composed of at least 16 different subunits, 5 of which are encoded in the nucleus.

Its subcellular location is the plastid. It is found in the chloroplast thylakoid membrane. It catalyses the reaction a plastoquinone + NADH + (n+1) H(+)(in) = a plastoquinol + NAD(+) + n H(+)(out). The enzyme catalyses a plastoquinone + NADPH + (n+1) H(+)(in) = a plastoquinol + NADP(+) + n H(+)(out). Functionally, NDH shuttles electrons from NAD(P)H:plastoquinone, via FMN and iron-sulfur (Fe-S) centers, to quinones in the photosynthetic chain and possibly in a chloroplast respiratory chain. The immediate electron acceptor for the enzyme in this species is believed to be plastoquinone. Couples the redox reaction to proton translocation, and thus conserves the redox energy in a proton gradient. The polypeptide is NAD(P)H-quinone oxidoreductase subunit 2 A, chloroplastic (Saccharum hybrid (Sugarcane)).